The primary structure comprises 485 residues: Retron Mx162 reverse transcriptase (485 aa).

The tract at residues 1-33 (MTARLDPFVPAASPQAVPTPELTAPSSDAAAKR) is disordered. Residues 167-407 (RWFAFHREVD…TRQRVTGLVV (241 aa)) form the Reverse transcriptase domain. Mg(2+)-binding residues include aspartate 250, aspartate 346, and aspartate 347.

Belongs to the bacterial reverse transcriptase family.

It carries out the reaction DNA(n) + a 2'-deoxyribonucleoside 5'-triphosphate = DNA(n+1) + diphosphate. Its activity is regulated as follows. msDNA synthesis is inhibited by rifampicin and chloramphenicol. Its function is as follows. Reverse transcriptase (RT) responsible for synthesis of msDNA-Mx162 (a branched molecule with RNA linked by a 2',5'-phosphodiester bond to ssDNA). The retron transcript serves as primer (from a conserved internal G residue) and template for the reaction, and codes for the RT. The retron is involved in antiviral defense. The sequence is that of Retron Mx162 reverse transcriptase from Myxococcus xanthus.